The primary structure comprises 420 residues: Glucose-1-phosphate adenylyltransferase (420 aa).

Alpha-D-glucose 1-phosphate-binding positions include Tyr-107, Gly-173, 188–189 (EK), and Ser-206.

This sequence belongs to the bacterial/plant glucose-1-phosphate adenylyltransferase family. Homotetramer.

It carries out the reaction alpha-D-glucose 1-phosphate + ATP + H(+) = ADP-alpha-D-glucose + diphosphate. Its pathway is glycan biosynthesis; glycogen biosynthesis. Involved in the biosynthesis of ADP-glucose, a building block required for the elongation reactions to produce glycogen. Catalyzes the reaction between ATP and alpha-D-glucose 1-phosphate (G1P) to produce pyrophosphate and ADP-Glc. This is Glucose-1-phosphate adenylyltransferase from Shewanella sp. (strain MR-4).